An 888-amino-acid polypeptide reads, in one-letter code: Potassium channel AKT6 (888 aa).

Over 1–84 the chain is Cytoplasmic; sequence MEKKKVWFWG…PFDPRYRAWE (84 aa). A disordered region spans residues 10-31; sequence GVKDDGEGGGGRGGGRTKDAED. A helical membrane pass occupies residues 85-105; the sequence is TFLVFLVLYTAWASPFEFGFL. At 106 to 113 the chain is on the extracellular side; it reads QKPRPPLS. A helical membrane pass occupies residues 114 to 134; it reads ILDNIVNGFFAVDIVLTFFVA. At 135–155 the chain is on the cytoplasmic side; it reads FLDKVTYLLVDDPKRIAWRYA. The chain crosses the membrane as a helical span at residues 156 to 176; it reads STWLIFDVVSTFPYEIFGSLL. The Extracellular segment spans residues 177–184; the sequence is HESIQGYG. The chain crosses the membrane as a helical; Voltage-sensor span at residues 185-205; it reads IFSMLRLWRLRRVSNCFARLE. The Cytoplasmic portion of the chain corresponds to 206-219; sequence KDRKYSYFWVRCSK. A helical transmembrane segment spans residues 220-240; the sequence is LLLVTLFVIHCGACFLYSIAA. Residues 241 to 267 lie on the Extracellular side of the membrane; it reads HYPDPSKTFMALTDENWKESPIAVRYN. Residues 268 to 287 constitute an intramembrane region (pore-forming); the sequence is TAMYWSITTFSTTGYGDIHG. The Extracellular segment spans residues 288 to 291; that stretch reads VNSR. A helical transmembrane segment spans residues 292–312; that stretch reads EMTFILFYMVFNLGLSAYIIG. The Cytoplasmic portion of the chain corresponds to 313–888; that stretch reads NMTNLVVHVT…GDFLLLSRDP (576 aa). An a nucleoside 3',5'-cyclic phosphate-binding site is contributed by 398–519; it reads LFHGISNDLL…IMNNLLQHLK (122 aa). ANK repeat units follow at residues 543–572, 576–605, 609–638, 640–669, and 673–702; these read DLPLSLCFAAARGDDLLLHQLLRRGSSPNE, DGRTALHIAASKGSHYCVVLLLEHGADPNI, EGNVPLWEAIIGRHREIAKLLAENGAKLSL, SVSYFSGLAVEKNCLDALKDIIKYGGDVTL, and NGTTALHRAVSEGHLEIVKFLLDQGADLDW. The 67-residue stretch at 822-888 folds into the KHA domain; sequence RVTISSPENG…GDFLLLSRDP (67 aa).

The protein belongs to the potassium channel family. Plant (TC 1.A.1.4) subfamily. As to quaternary structure, the potassium channel is probably composed of a homo- or heterotetrameric complex of pore-forming subunits. As to expression, predominantly expressed in flowers; especially in pollen.

The protein resides in the membrane. Highly selective inward-rectifying potassium channel that could mediate potassium uptake in the pollen membrane. Plays an important role in pollen tube development. Assuming opened or closed conformations in response to the voltage difference across the membrane, the channel is activated by hyperpolarization. May interact with the cytoskeleton or with regulatory proteins. The chain is Potassium channel AKT6 (AKT6) from Arabidopsis thaliana (Mouse-ear cress).